Here is a 497-residue protein sequence, read N- to C-terminus: Signal recognition particle subunit SRP54 1 (497 aa).

Residues 1 to 295 (MVLAQLGGSI…DVKPFVSRLL (295 aa)) form a G-domain region. GTP-binding positions include 108 to 115 (GLQGSGKT), 190 to 194 (DTSGR), and 248 to 251 (TKLD). The segment at 296–497 (GMGDLSGLMD…MLGGMGLGGD (202 aa)) is M-domain.

This sequence belongs to the GTP-binding SRP family. SRP54 subfamily. Component of a signal recognition particle (SRP) complex that consists of a 7SL RNA molecule of 300 nucleotides and six protein subunits: SRP72, SRP68, SRP54, SRP19, SRP14 and SRP9.

The protein localises to the cytoplasm. The protein resides in the endoplasmic reticulum. The enzyme catalyses GTP + H2O = GDP + phosphate + H(+). Its function is as follows. Component of the signal recognition particle (SRP) complex, a ribonucleoprotein complex that mediates the cotranslational targeting of secretory and membrane proteins to the endoplasmic reticulum (ER). As part of the SRP complex, associates with the SRP receptor (SR) component SRPRA to target secretory proteins to the endoplasmic reticulum membrane. Binds to the signal sequence of presecretory proteins when they emerge from the ribosomes. Displays basal GTPase activity, and stimulates reciprocal GTPase activation of the SR subunit SRPRA. Forms a guanosine 5'-triphosphate (GTP)-dependent complex with the SR subunit SRPRA. SR compaction and GTPase mediated rearrangement of SR drive SRP-mediated cotranslational protein translocation into the ER. Requires the presence of SRP9/SRP14 and/or SRP19 to stably interact with RNA. The protein is Signal recognition particle subunit SRP54 1 (SRP54-1) of Hordeum vulgare (Barley).